The primary structure comprises 1114 residues: Proto-oncogene tyrosine-protein kinase receptor Ret (1114 aa).

Positions 1 to 28 are cleaved as a signal peptide; the sequence is MAKATSGAAGLRLLLLLLLPLLGKVALG. Residues 29-153 form a cadherin-like region 1 (CLD1) region; it reads LYFSRDAYWE…RVYFSFFNTS (125 aa). Over 29 to 635 the chain is Extracellular; the sequence is LYFSRDAYWE…QDPLCDELCR (607 aa). Residue Asn98 is glycosylated (N-linked (GlcNAc...) asparagine). Residues Cys137 and Cys142 are joined by a disulfide bond. N-linked (GlcNAc...) asparagine glycosylation is present at Asn151. Disulfide bonds link Cys157-Cys197 and Cys166-Cys243. The 105-residue stretch at 168–272 folds into the Cadherin domain; the sequence is PETRPSFRIR…YDEDDSAPTF (105 aa). Residues Glu178 and Asn179 each contribute to the Ca(2+) site. An N-linked (GlcNAc...) asparagine glycan is attached at Asn199. Ca(2+) contacts are provided by Asp230, Glu232, Asp264, Glu265, Asp266, Asp267, Ser268, Asp300, and Asp302. Residues 265-379 form a cadherin-like region 3 (CLD3) region; sequence EDDSAPTFPA…MQLAVLVNDS (115 aa). Residues Asn336, Asn343, Asn361, Asn367, and Asn377 are each glycosylated (N-linked (GlcNAc...) asparagine). Asp378 is a binding site for Ca(2+). A glycan (N-linked (GlcNAc...) asparagine) is linked at Asn394. The tract at residues 405-506 is cadherin-like region 4 (CLD4); that stretch reads PSTYSLSVSR…QAQLLVTVEG (102 aa). Cys426 and Cys430 are joined by a disulfide. N-linked (GlcNAc...) asparagine glycosylation is found at Asn448 and Asn468. Cystine bridges form between Cys449-Cys478, Cys515-Cys531, Cys519-Cys541, and Cys528-Cys558. N-linked (GlcNAc...) asparagine glycosylation is present at Asn554. The Ca(2+) site is built by Thr564, Cys565, Asp567, His569, Glu574, and Asp584. Cystine bridges form between Cys565–Cys581, Cys570–Cys585, Cys609–Cys620, Cys611–Cys618, and Cys630–Cys634. A helical transmembrane segment spans residues 636-657; that stretch reads TVIAAAVLFSFIVSVLLSAFCI. At 658–1114 the chain is on the cytoplasmic side; it reads HCYHKFAHKP…AAKLMDTFDS (457 aa). At Tyr687 the chain carries Phosphotyrosine; by autocatalysis. O-linked (GlcNAc) serine glycosylation is present at Ser688. Ser696 is modified (phosphoserine). In terms of domain architecture, Protein kinase spans 724-1016; it reads LVLGKTLGEG…KMMVKRRDYL (293 aa). ATP is bound by residues 730-738 and Lys758; that span reads LGEGEFGKV. 805 to 807 lines the semaxanib pocket; that stretch reads EYA. Phosphotyrosine; by autocatalysis is present on residues Tyr806, Tyr809, and Tyr826. Asp874 serves as the catalytic Proton acceptor. A phosphotyrosine; by autocatalysis mark is found at Tyr900, Tyr905, Tyr981, Tyr1015, Tyr1029, Tyr1062, Tyr1090, and Tyr1096.

It belongs to the protein kinase superfamily. Tyr protein kinase family. Phosphorylated form interacts with the PBT domain of DOK2, DOK4 and DOK5. The phosphorylated form interacts with PLCG1 and GRB7. Interacts (not phosphorylated) with PTK2/FAK1 (via FERM domain). Extracellular cell-membrane anchored RET cadherin fragments form complex in neurons with reduced trophic status, preferentially at the contact sites between somas. Interacts with AIP in the pituitary gland; this interaction prevents the formation of the AIP-survivin complex. Interacts (inactive) with CBLC and CD2AP; dissociates upon activation by GDNF which increases CBLC:CD2AP interaction. It depends on Ca(2+) as a cofactor. In terms of processing, autophosphorylated on C-terminal tyrosine residues upon ligand stimulation. Proteolytically cleaved by caspase-3. The soluble RET kinase fragment is able to induce cell death. The extracellular cell-membrane anchored RET cadherin fragment accelerates cell adhesion in sympathetic neurons.

The protein resides in the cell membrane. It is found in the endosome membrane. It catalyses the reaction L-tyrosyl-[protein] + ATP = O-phospho-L-tyrosyl-[protein] + ADP + H(+). Its activity is regulated as follows. Repressed by 4-(3-hydroxyanilino)-quinolines derivatives, indolin-2-one-derivatives, 2-(alkylsulfanyl)-4-(3-thienyl) nicotinonitrile analogs, 3- and 4-substituted beta-carbolin-1-ones, vandetanib, motesanib, sorafenib (BAY 43-9006), cabozantinib (XL184), lenvatinib, sunitinib, nintedanib, and withaferin A (WA). Inactivation by sorafenib both reduces kinase activity and promotes lysosomal degradation. Its function is as follows. Receptor tyrosine-protein kinase involved in numerous cellular mechanisms including cell proliferation, neuronal navigation, cell migration, and cell differentiation in response to glia cell line-derived growth family factors (GDNF, NRTN, ARTN, PSPN and GDF15). In contrast to most receptor tyrosine kinases, RET requires not only its cognate ligands but also coreceptors, for activation. GDNF ligands (GDNF, NRTN, ARTN, PSPN and GDF15) first bind their corresponding GDNFR coreceptors (GFRA1, GFRA2, GFRA3, GFRA4 and GFRAL, respectively), triggering RET autophosphorylation and activation, leading to activation of downstream signaling pathways, including the MAPK- and AKT-signaling pathways. Acts as a dependence receptor via the GDNF-GFRA1 signaling: in the presence of the ligand GDNF in somatotrophs within pituitary, promotes survival and down regulates growth hormone (GH) production, but triggers apoptosis in absence of GDNF. Required for the molecular mechanisms orchestration during intestine organogenesis via the ARTN-GFRA3 signaling: involved in the development of enteric nervous system and renal organogenesis during embryonic life, and promotes the formation of Peyer's patch-like structures, a major component of the gut-associated lymphoid tissue. Mediates, through interaction with GDF15-receptor GFRAL, GDF15-induced cell-signaling in the brainstem which triggers an aversive response, characterized by nausea, vomiting, and/or loss of appetite in response to various stresses. Modulates cell adhesion via its cleavage by caspase in sympathetic neurons and mediates cell migration in an integrin (e.g. ITGB1 and ITGB3)-dependent manner. Also active in the absence of ligand, triggering apoptosis through a mechanism that requires receptor intracellular caspase cleavage. Triggers the differentiation of rapidly adapting (RA) mechanoreceptors. Involved in the development of the neural crest. Regulates nociceptor survival and size. Phosphorylates PTK2/FAK1. In terms of biological role, isoform 1 in complex with GFRAL induces higher activation of MAPK-signaling pathway than isoform 2 in complex with GFRAL. This is Proto-oncogene tyrosine-protein kinase receptor Ret from Homo sapiens (Human).